Consider the following 163-residue polypeptide: MMMLRQTSRKAYLGLQASPLGLGRRLYHENVIDHFENPRNVGSFNRNDPNVGTGLVGAPACGDLMSLQIKVDDSGQIIDTRFKTFGCGSAIASSSVASEWIKGKTLDEVMTIKNAEIAKHLRLPPVKLHCSMLAEDAIKSAVRDYKEKQAKTNAAAAEETVKA.

A mitochondrion-targeting transit peptide spans 1–48 (MMMLRQTSRKAYLGLQASPLGLGRRLYHENVIDHFENPRNVGSFNRND).

Belongs to the NifU family. As to quaternary structure, component of the core Fe-S cluster (ISC) assembly machinery. Requires [2Fe-2S] cluster as cofactor. Mostly expressed in leaves, pollen and flowers.

It localises to the mitochondrion matrix. It participates in cofactor biosynthesis; iron-sulfur cluster biosynthesis. Its function is as follows. Scaffold protein for the de novo synthesis of iron-sulfur (Fe-S) clusters within mitochondria, which is required for maturation of both mitochondrial and cytoplasmic [2Fe-2S] and [4Fe-4S] proteins. First, a [2Fe-2S] cluster is transiently assembled on the scaffold protein ISCU (ISU1, ISU2 or ISU3). In a second step, the cluster is released from ISCU, transferred to a glutaredoxin, followed by the formation of mitochondrial [2Fe-2S] proteins, the synthesis of [4Fe-4S] clusters and their target-specific insertion into the recipient apoproteins. Cluster assembly on ISCU depends on the function of the cysteine desulfurase complex NFS1-ISD11, which serves as the sulfur donor for cluster synthesis, the iron-binding protein frataxin as the putative iron donor, and the electron transfer chain comprised of ferredoxin reductase and ferredoxin, which receive their electrons from NADH. This Arabidopsis thaliana (Mouse-ear cress) protein is Iron-sulfur cluster assembly protein 2 (ISU2).